A 504-amino-acid chain; its full sequence is Syntaphilin (504 aa).

A disordered region spans residues 1 to 74 (MAMSLQGSRR…HGIKPPTPEQ (74 aa)). Composition is skewed to low complexity over residues 7 to 26 (GSRR…VSVR) and 33 to 49 (SLSS…SDSS). A coiled-coil region spans residues 79–161 (LQQKEVCIRH…VKNNLIDKDK (83 aa)). The tract at residues 191–244 (VAKEEGTGESAGGSPARSLTRSSTYTKLSDPAVCGDRQAGDPSNTPAEDRADSG) is disordered. A phosphoserine mark is found at Ser200 and Ser204. The segment covering 207-217 (RSLTRSSTYTK) has biased composition (polar residues). The residue at position 214 (Thr214) is a Phosphothreonine. Ser219 carries the post-translational modification Phosphoserine. Residue Thr235 is modified to Phosphothreonine. A helical transmembrane segment spans residues 437 to 456 (YIVDLLAVVVPAVPTVAWLC).

Binds to STX1A. Interacts with DNM1; this interaction inhibits the binding of DNM1 to AMPH and DNM1-receptor-mediated endocytosis.

Its subcellular location is the membrane. It localises to the synapse. It is found in the synaptosome. Its function is as follows. Inhibits SNARE complex formation by absorbing free STX1A. This Rattus norvegicus (Rat) protein is Syntaphilin.